A 38-amino-acid polypeptide reads, in one-letter code: Cytochrome b6-f complex subunit 5 (38 aa).

Residues 5-25 traverse the membrane as a helical segment; sequence LLSGIVLGSIPITLAGSFVTA.

The protein belongs to the PetG family. In terms of assembly, the 4 large subunits of the cytochrome b6-f complex are cytochrome b6, subunit IV (17 kDa polypeptide, PetD), cytochrome f and the Rieske protein, while the 4 small subunits are PetG, PetL, PetM and PetN. The complex functions as a dimer.

It localises to the plastid. The protein resides in the chloroplast thylakoid membrane. Its function is as follows. Component of the cytochrome b6-f complex, which mediates electron transfer between photosystem II (PSII) and photosystem I (PSI), cyclic electron flow around PSI, and state transitions. PetG is required for either the stability or assembly of the cytochrome b6-f complex. The protein is Cytochrome b6-f complex subunit 5 of Huperzia lucidula (Shining clubmoss).